Here is a 1488-residue protein sequence, read N- to C-terminus: Eukaryotic translation initiation factor 4G (1488 aa).

Disordered regions lie at residues 196–320 (VQHR…GQTS), 337–367 (DSEKVDLTSKVSGLTSATSESSISPILGKSE), and 415–707 (THQI…MTEA). Composition is skewed to basic and acidic residues over residues 216–244 (VSEKESKAPSIPEKHSKESKAPSAVEKHP) and 274–299 (ADEKKESLPMTDSLKDNKKNATRNDT). Polar residues-rich tracts occupy residues 300-310 (KNLPQQPQSAS), 345-360 (SKVSGLTSATSESSIS), 448-464 (SLATSKPGNSDATSFVT), and 473-495 (CTTSVPEDHSLMNTSHNKDTQTL). The segment covering 496 to 520 (SASVDASDVSEVNSGTSSESTSQST) has biased composition (low complexity). Positions 555–566 (QVKHADGAKDES) are enriched in basic and acidic residues. The segment covering 627–646 (QEQSESVATSDGADSSSTVD) has biased composition (polar residues). Basic and acidic residues predominate over residues 651–671 (LPEESEREVMCEDDGKKKVEP). The segment covering 683-696 (PKLQSSDSGNQASA) has biased composition (polar residues). The interval 709-721 (GRKKYSRDFLLTF) is EIF4E-binding. Basic and acidic residues predominate over residues 753–784 (DREPHPSSARGSDRPTSRGDRRGPAMDDDKWL). 3 disordered regions span residues 753–795 (DREP…PNRD), 974–1000 (RGEREEAEADKTEEEGEIKQTKEEREE), and 1107–1299 (WQQR…SEEE). The region spanning 883–1106 (QRQLKAILNK…RDSIDLRKNK (224 aa)) is the MIF4G domain. Residues 978–989 (EEAEADKTEEEG) are compositionally biased toward acidic residues. 4 stretches are compositionally biased toward basic and acidic residues: residues 990-1000 (EIKQTKEEREE), 1111-1132 (RKVDGPKKIDEVHRDAAQERHA), 1181-1191 (IRYEQERHQFD), and 1254-1267 (TREDTSSRIPDRFS). Over residues 1273–1294 (AAQSASSSHRPASQEGRSGNKS) the composition is skewed to polar residues. Positions 1299-1423 (ELREKSIATI…VLQDVGKLIE (125 aa)) constitute an MI domain.

Belongs to the eukaryotic initiation factor 4G family. In terms of assembly, EIF4F is a multi-subunit complex, the composition of which varies with external and internal environmental conditions. It is composed of at least EIF4A, EIF4E and EIF4G. In higher plants two isoforms of EIF4F have been identified, named isoform EIF4F and isoform EIF(iso)4F. Isoform EIF4F has subunits p220 and p26, whereas isoform EIF(iso)4F has subunits p82 and p28.

Component of the protein complex eIF4F, which is involved in the recognition of the mRNA cap, ATP-dependent unwinding of 5'-terminal secondary structure and recruitment of mRNA to the ribosome. This Triticum aestivum (Wheat) protein is Eukaryotic translation initiation factor 4G.